Here is a 324-residue protein sequence, read N- to C-terminus: Holliday junction branch migration complex subunit RuvB (324 aa).

The interval 1 to 168 is large ATPase domain (RuvB-L); that stretch reads MEDLALRPKT…FGIVEHLEYY (168 aa). ATP is bound by residues Leu-6, Arg-7, Gly-48, Lys-51, Thr-52, Thr-53, 115–117, Arg-158, Tyr-168, and Arg-205; that span reads EDF. Thr-52 contributes to the Mg(2+) binding site. The small ATPAse domain (RuvB-S) stretch occupies residues 169 to 239; the sequence is TPEELAQGVM…RALEALAALG (71 aa). The interval 242 to 324 is head domain (RuvB-H); that stretch reads ELGLEKRDRE…PPPVGPLLEP (83 aa). DNA-binding residues include Arg-297 and Arg-302.

This sequence belongs to the RuvB family. In terms of assembly, homohexamer. Forms an RuvA(8)-RuvB(12)-Holliday junction (HJ) complex. HJ DNA is sandwiched between 2 RuvA tetramers; dsDNA enters through RuvA and exits via RuvB. An RuvB hexamer assembles on each DNA strand where it exits the tetramer. Each RuvB hexamer is contacted by two RuvA subunits (via domain III) on 2 adjacent RuvB subunits; this complex drives branch migration. In the full resolvosome a probable DNA-RuvA(4)-RuvB(12)-RuvC(2) complex forms which resolves the HJ.

It localises to the cytoplasm. The catalysed reaction is ATP + H2O = ADP + phosphate + H(+). The ATPase activity of RuvB is enhanced by RuvA. Its function is as follows. The RuvA-RuvB-RuvC complex processes Holliday junction (HJ) DNA during genetic recombination and DNA repair, while the RuvA-RuvB complex plays an important role in the rescue of blocked DNA replication forks via replication fork reversal (RFR). RuvA specifically binds to HJ cruciform DNA, conferring on it an open structure. The RuvB hexamer acts as an ATP-dependent pump, pulling dsDNA into and through the RuvAB complex. RuvB forms 2 homohexamers on either side of HJ DNA bound by 1 or 2 RuvA tetramers; 4 subunits per hexamer contact DNA at a time. Coordinated motions by a converter formed by DNA-disengaged RuvB subunits stimulates ATP hydrolysis and nucleotide exchange. Immobilization of the converter enables RuvB to convert the ATP-contained energy into a lever motion, pulling 2 nucleotides of DNA out of the RuvA tetramer per ATP hydrolyzed, thus driving DNA branch migration. The RuvB motors rotate together with the DNA substrate, which together with the progressing nucleotide cycle form the mechanistic basis for DNA recombination by continuous HJ branch migration. Branch migration allows RuvC to scan DNA until it finds its consensus sequence, where it cleaves and resolves cruciform DNA. Functionally, has Mg(2+)-, DNA-dependent ATPase activity; dsDNA and supercoiled DNA but not ssDNA stimulate activity. Binds to linear dsDNA in the absence of ATP or ATP-gamma-S. This subunit can promote Holliday junction migration alone in vitro. Partially complements an E.coli deletion for UV sensitivity. This Thermus thermophilus protein is Holliday junction branch migration complex subunit RuvB.